The sequence spans 380 residues: Cytochrome b (380 aa).

4 consecutive transmembrane segments (helical) span residues 33 to 53 (FGSL…FLAM), 77 to 98 (WLIR…FLHV), 113 to 133 (WNMG…GYVL), and 178 to 198 (FFAF…VHLL). Residues histidine 83 and histidine 97 each coordinate heme. Heme is bound by residues histidine 182 and histidine 196. Histidine 201 contributes to the a ubiquinone binding site. 4 helical membrane-spanning segments follow: residues 226 to 246 (VKDF…TLFF), 288 to 308 (LGGV…PLLH), 320 to 340 (ITQT…WIGG), and 347 to 367 (FIII…IFMP).

This sequence belongs to the cytochrome b family. As to quaternary structure, the cytochrome bc1 complex contains 11 subunits: 3 respiratory subunits (MT-CYB, CYC1 and UQCRFS1), 2 core proteins (UQCRC1 and UQCRC2) and 6 low-molecular weight proteins (UQCRH/QCR6, UQCRB/QCR7, UQCRQ/QCR8, UQCR10/QCR9, UQCR11/QCR10 and a cleavage product of UQCRFS1). This cytochrome bc1 complex then forms a dimer. The cofactor is heme.

The protein resides in the mitochondrion inner membrane. In terms of biological role, component of the ubiquinol-cytochrome c reductase complex (complex III or cytochrome b-c1 complex) that is part of the mitochondrial respiratory chain. The b-c1 complex mediates electron transfer from ubiquinol to cytochrome c. Contributes to the generation of a proton gradient across the mitochondrial membrane that is then used for ATP synthesis. This is Cytochrome b (MT-CYB) from Microtus arvalis (Common vole).